The chain runs to 428 residues: MAKEKPHVNIVFIGHVDHGKSTTIGRLLFDTANIPENIIKKFEEMGEKGKSFKFAWVMDRLKEERERGITIDVAHTKFETPHRYITIIDAPGHRDFVKNMITGASQADAAVLVVAATDGVMPQTKEHAFLARTLGIGHIIVAINKMDMVDYDEKKFKQVSEQVKKLLMMLGYKDFPIIPISAWEGDNVVKKSDKMPWYNGPTLIEALDQIPEPPKPTDKPLRIPIQDVYSIKGVGTVPVGRVETGVLRVGDVVIFEPASTIFHKPIQGEVKSIEMHHEPMQEALPGDNIGFNVRGVGKNDIKRGDVAGHTNNPPTVVRPKDTFKAQIIVLNHPTAITIGYTPVLHAHTLQVAVRFEQLLAKLDPRTGNVVEENPQFIKTGDSAIVVLRPTKPMVIEPVKEIPQMGRFAIRDMGQTVAAGMVISIQKAE.

The 211-residue stretch at 5–215 (KPHVNIVFIG…ALDQIPEPPK (211 aa)) folds into the tr-type G domain. A G1 region spans residues 14–21 (GHVDHGKS). Residue 14-21 (GHVDHGKS) coordinates GTP. A Mg(2+)-binding site is contributed by Ser-21. The G2 stretch occupies residues 68–72 (GITID). Positions 89–92 (DAPG) are G3. Residues 89-93 (DAPGH) and 144-147 (NKMD) each bind GTP. Residues 144 to 147 (NKMD) form a G4 region. A G5 region spans residues 181–183 (SAW).

Belongs to the TRAFAC class translation factor GTPase superfamily. Classic translation factor GTPase family. EF-Tu/EF-1A subfamily.

It localises to the cytoplasm. The catalysed reaction is GTP + H2O = GDP + phosphate + H(+). In terms of biological role, GTP hydrolase that promotes the GTP-dependent binding of aminoacyl-tRNA to the A-site of ribosomes during protein biosynthesis. The polypeptide is Elongation factor 1-alpha (Thermococcus onnurineus (strain NA1)).